The sequence spans 204 residues: MVKLKICGNATLSDIIEFSKLDVDYLGIITDVVSQRFVKSEFLTFVKRYVEKPIVNVKVNVQISEIERELLVSDYFQIHRVLDDSELELLKSYDFRKRIILYVPASFEYKKYLERAIDTVDMVLVDSVKKGVGVDYNVVSSFLKDYPYLGVGGKISIDNISNFIDLNPAWLDISSSIEIYPGKKDINMVKKIVEVVKYGSSSNK.

This sequence belongs to the TrpF family.

The enzyme catalyses N-(5-phospho-beta-D-ribosyl)anthranilate = 1-(2-carboxyphenylamino)-1-deoxy-D-ribulose 5-phosphate. The protein operates within amino-acid biosynthesis; L-tryptophan biosynthesis; L-tryptophan from chorismate: step 3/5. This is N-(5'-phosphoribosyl)anthranilate isomerase (trpF) from Saccharolobus solfataricus (strain ATCC 35092 / DSM 1617 / JCM 11322 / P2) (Sulfolobus solfataricus).